An 840-amino-acid polypeptide reads, in one-letter code: Cytosolic carboxypeptidase 2 (840 aa).

Positions 358 to 628 (YPYTYTDLQC…HVCDTLLDFC (271 aa)) constitute a Peptidase M14 domain. Residues histidine 424, glutamate 427, and histidine 520 each coordinate Zn(2+). The active-site Proton donor/acceptor is glutamate 592. Residues 706 to 719 (MFKKKKKKSLQTRK) are compositionally biased toward basic residues. 2 disordered regions span residues 706–726 (MFKKKKKKSLQTRKQRNEQYQ) and 758–789 (ESSSFLPMRNENPRLNETNLNRRDKDTSLDPS).

Belongs to the peptidase M14 family. As to quaternary structure, interacts with RARRES1, KIF11 and MAPRE1. It depends on Zn(2+) as a cofactor.

The protein localises to the cytoplasm. The protein resides in the cytosol. It localises to the cytoskeleton. Its subcellular location is the microtubule organizing center. It is found in the centrosome. The protein localises to the centriole. The protein resides in the cilium basal body. It carries out the reaction (L-glutamyl)(n+1)-gamma-L-glutamyl-L-glutamyl-[protein] + H2O = (L-glutamyl)(n)-gamma-L-glutamyl-L-glutamyl-[protein] + L-glutamate. Inhibited by RARRES1. In terms of biological role, metallocarboxypeptidase that mediates deglutamylation of tubulin and non-tubulin target proteins. Catalyzes the removal of polyglutamate side chains present on the gamma-carboxyl group of glutamate residues within the C-terminal tail of tubulin protein. Specifically cleaves tubulin long-side-chains, while it is not able to remove the branching point glutamate. Also catalyzes the removal of polyglutamate residues from the carboxy-terminus of non-tubulin proteins such as MYLK. This is Cytosolic carboxypeptidase 2 (AGBL2) from Macaca fascicularis (Crab-eating macaque).